Here is a 204-residue protein sequence, read N- to C-terminus: Urease accessory protein UreG (204 aa).

12–19 (GPVGSGKT) lines the GTP pocket.

It belongs to the SIMIBI class G3E GTPase family. UreG subfamily. Homodimer. UreD, UreF and UreG form a complex that acts as a GTP-hydrolysis-dependent molecular chaperone, activating the urease apoprotein by helping to assemble the nickel containing metallocenter of UreC. The UreE protein probably delivers the nickel.

Its subcellular location is the cytoplasm. Functionally, facilitates the functional incorporation of the urease nickel metallocenter. This process requires GTP hydrolysis, probably effectuated by UreG. In Pseudomonas fluorescens (strain SBW25), this protein is Urease accessory protein UreG.